The primary structure comprises 541 residues: Protein ST7 homolog (541 aa).

A helical transmembrane segment spans residues phenylalanine 15–tryptophan 35. The interval aspartate 62–proline 116 is disordered. A compositionally biased stretch (low complexity) spans serine 67 to serine 83. The segment covering asparagine 84–threonine 105 has biased composition (gly residues). The chain crosses the membrane as a helical span at residues leucine 476–leucine 496.

The protein belongs to the ST7 family.

Its subcellular location is the membrane. This chain is Protein ST7 homolog, found in Drosophila pseudoobscura pseudoobscura (Fruit fly).